The primary structure comprises 732 residues: Catalase-peroxidase (732 aa).

The disordered stretch occupies residues 1–21; sequence MSMAEMRCPFSGHGAATTPAS. The N-terminal stretch at 1–22 is a signal peptide; it reads MSMAEMRCPFSGHGAATTPASA. A cross-link (tryptophyl-tyrosyl-methioninium (Trp-Tyr) (with M-246)) is located at residues 97-220; the sequence is WHSAGTYRLA…LAATEMGLIY (124 aa). His98 (proton acceptor) is an active-site residue. The segment at residues 220-246 is a cross-link (tryptophyl-tyrosyl-methioninium (Tyr-Met) (with W-97)); sequence YVNPEGPHGEPDPVASGREVRDTFARM. Residue His261 participates in heme b binding.

Belongs to the peroxidase family. Peroxidase/catalase subfamily. Homodimer or homotetramer. Requires heme b as cofactor. In terms of processing, formation of the three residue Trp-Tyr-Met cross-link is important for the catalase, but not the peroxidase activity of the enzyme.

The enzyme catalyses H2O2 + AH2 = A + 2 H2O. It carries out the reaction 2 H2O2 = O2 + 2 H2O. Its function is as follows. Bifunctional enzyme with both catalase and broad-spectrum peroxidase activity. The chain is Catalase-peroxidase from Synechococcus sp. (strain RCC307).